Reading from the N-terminus, the 284-residue chain is 2-dehydro-3-deoxyphosphooctonate aldolase (284 aa).

The protein belongs to the KdsA family.

Its subcellular location is the cytoplasm. It carries out the reaction D-arabinose 5-phosphate + phosphoenolpyruvate + H2O = 3-deoxy-alpha-D-manno-2-octulosonate-8-phosphate + phosphate. Its pathway is carbohydrate biosynthesis; 3-deoxy-D-manno-octulosonate biosynthesis; 3-deoxy-D-manno-octulosonate from D-ribulose 5-phosphate: step 2/3. It functions in the pathway bacterial outer membrane biogenesis; lipopolysaccharide biosynthesis. This is 2-dehydro-3-deoxyphosphooctonate aldolase from Burkholderia cenocepacia (strain ATCC BAA-245 / DSM 16553 / LMG 16656 / NCTC 13227 / J2315 / CF5610) (Burkholderia cepacia (strain J2315)).